Reading from the N-terminus, the 442-residue chain is Glutamyl-tRNA(Gln) amidotransferase subunit D (442 aa).

Residues threonine 63–serine 84 are disordered. Residues proline 102–serine 429 enclose the Asparaginase/glutaminase domain. Catalysis depends on residues threonine 112, threonine 188, aspartate 189, and lysine 265.

It belongs to the asparaginase 1 family. GatD subfamily. As to quaternary structure, heterodimer of GatD and GatE.

It carries out the reaction L-glutamyl-tRNA(Gln) + L-glutamine + ATP + H2O = L-glutaminyl-tRNA(Gln) + L-glutamate + ADP + phosphate + H(+). Its function is as follows. Allows the formation of correctly charged Gln-tRNA(Gln) through the transamidation of misacylated Glu-tRNA(Gln) in organisms which lack glutaminyl-tRNA synthetase. The reaction takes place in the presence of glutamine and ATP through an activated gamma-phospho-Glu-tRNA(Gln). The GatDE system is specific for glutamate and does not act on aspartate. The sequence is that of Glutamyl-tRNA(Gln) amidotransferase subunit D from Haloquadratum walsbyi (strain DSM 16790 / HBSQ001).